A 170-amino-acid chain; its full sequence is Lipoprotein signal peptidase (170 aa).

The next 3 helical transmembrane spans lie at 12-32 (WYWV…WVLA), 67-87 (WQRW…TVWL), and 93-113 (SLLK…GNLV). Active-site residues include Asp123 and Asp141. The chain crosses the membrane as a helical span at residues 137-157 (FNIADSAIFIGAVLIIWDSFF).

Belongs to the peptidase A8 family.

It localises to the cell inner membrane. The enzyme catalyses Release of signal peptides from bacterial membrane prolipoproteins. Hydrolyzes -Xaa-Yaa-Zaa-|-(S,diacylglyceryl)Cys-, in which Xaa is hydrophobic (preferably Leu), and Yaa (Ala or Ser) and Zaa (Gly or Ala) have small, neutral side chains.. Its pathway is protein modification; lipoprotein biosynthesis (signal peptide cleavage). Its function is as follows. This protein specifically catalyzes the removal of signal peptides from prolipoproteins. This Shewanella oneidensis (strain ATCC 700550 / JCM 31522 / CIP 106686 / LMG 19005 / NCIMB 14063 / MR-1) protein is Lipoprotein signal peptidase.